Consider the following 122-residue polypeptide: UPF0102 protein Rleg2_4331 (122 aa).

It belongs to the UPF0102 family.

The protein is UPF0102 protein Rleg2_4331 of Rhizobium leguminosarum bv. trifolii (strain WSM2304).